Here is a 387-residue protein sequence, read N- to C-terminus: GTP-binding protein 10 (387 aa).

One can recognise an Obg domain in the interval glycine 13–isoleucine 148. Residues alanine 149 to aspartate 344 form the OBG-type G domain. GTP-binding positions include glycine 155–serine 162, aspartate 202–leucine 206, and asparagine 278–aspartate 281.

This sequence belongs to the TRAFAC class OBG-HflX-like GTPase superfamily. OBG GTPase family.

It is found in the nucleus. The protein localises to the nucleolus. May be involved in the ribosome maturation process. This Bos taurus (Bovine) protein is GTP-binding protein 10 (GTPBP10).